A 160-amino-acid polypeptide reads, in one-letter code: MAPK regulated corepressor interacting protein 2 (160 aa).

Position 1 is an N-acetylmethionine (methionine 1). A disordered region spans residues 1–64; sequence MYTITKGPSK…GPWPLSSPGP (64 aa). Arginine 35 is subject to Omega-N-methylarginine. Positions 37-61 are enriched in pro residues; it reads PAPPTSQPPRAQPFAQPPGPWPLSS. Serine 61 is subject to Phosphoserine. Arginine 65 is modified (omega-N-methylarginine). Serine 82 carries the post-translational modification Phosphoserine.

It belongs to the MCRIP family. As to quaternary structure, interacts with DDX6. Interacts with MCRIP1.

Its subcellular location is the cytoplasm. It localises to the stress granule. It is found in the nucleus. In Homo sapiens (Human), this protein is MAPK regulated corepressor interacting protein 2 (MCRIP2).